Here is a 273-residue protein sequence, read N- to C-terminus: Nucleotide-binding protein TT_C1664 (273 aa).

An ATP-binding site is contributed by 8-15; that stretch reads GLSGAGKT. 57–60 is a binding site for GTP; it reads DARA.

The protein belongs to the RapZ-like family.

Its function is as follows. Displays ATPase and GTPase activities. This Thermus thermophilus (strain ATCC BAA-163 / DSM 7039 / HB27) protein is Nucleotide-binding protein TT_C1664.